We begin with the raw amino-acid sequence, 310 residues long: Ribose-phosphate pyrophosphokinase (310 aa).

ATP-binding positions include 34-36 and 93-94; these read DQE and RQ. Mg(2+)-binding residues include His-127 and Asp-167. Residue Lys-190 is part of the active site. Residues Arg-192, Asp-216, and 220-224 contribute to the D-ribose 5-phosphate site; that span reads DSGGT.

This sequence belongs to the ribose-phosphate pyrophosphokinase family. Class I subfamily. Homohexamer. Mg(2+) is required as a cofactor.

The protein localises to the cytoplasm. It carries out the reaction D-ribose 5-phosphate + ATP = 5-phospho-alpha-D-ribose 1-diphosphate + AMP + H(+). It participates in metabolic intermediate biosynthesis; 5-phospho-alpha-D-ribose 1-diphosphate biosynthesis; 5-phospho-alpha-D-ribose 1-diphosphate from D-ribose 5-phosphate (route I): step 1/1. Functionally, involved in the biosynthesis of the central metabolite phospho-alpha-D-ribosyl-1-pyrophosphate (PRPP) via the transfer of pyrophosphoryl group from ATP to 1-hydroxyl of ribose-5-phosphate (Rib-5-P). The chain is Ribose-phosphate pyrophosphokinase from Brucella melitensis biotype 1 (strain ATCC 23456 / CCUG 17765 / NCTC 10094 / 16M).